We begin with the raw amino-acid sequence, 149 residues long: Large ribosomal subunit protein uL11 (149 aa).

It belongs to the universal ribosomal protein uL11 family. Part of the ribosomal stalk of the 50S ribosomal subunit. Interacts with L10 and the large rRNA to form the base of the stalk. L10 forms an elongated spine to which L12 dimers bind in a sequential fashion forming a multimeric L10(L12)X complex. Post-translationally, one or more lysine residues are methylated.

Its function is as follows. Forms part of the ribosomal stalk which helps the ribosome interact with GTP-bound translation factors. The chain is Large ribosomal subunit protein uL11 from Azorhizobium caulinodans (strain ATCC 43989 / DSM 5975 / JCM 20966 / LMG 6465 / NBRC 14845 / NCIMB 13405 / ORS 571).